The primary structure comprises 1049 residues: Protein phosphatase 1 regulatory subunit 12A (1049 aa).

ANK repeat units lie at residues 39–68, 72–101, 105–134, 138–164, 198–227, and 231–260; these read DDGA…DINY, DGLT…CINQ, EGWI…SVGV, EGET…RQGV, SGGT…DVNI, and DGWT…DMDV. Residues 302–947 form a disordered region; that stretch reads LIETTTTGDN…RPYSRFEKDD (646 aa). Positions 303 to 315 are enriched in polar residues; sequence IETTTTGDNNQSV. The span at 319–341 shows a compositional bias: basic and acidic residues; sequence KSKETLLLEPEKTAPRIETLEPE. The span at 359–371 shows a compositional bias: acidic residues; it reads SEEEEEEDSESEN. Residues 378 to 421 show a composition bias toward low complexity; it reads SSVPSSVSNSTPTTAPSSITVTSPTTPSNQVTTPTSPTKKVSTP. The segment covering 426 to 436 has biased composition (basic and acidic residues); that stretch reads SPKEEDRKDES. Over residues 473–484 the composition is skewed to low complexity; that stretch reads RSASSPRLSSSL. Over residues 485–497 the composition is skewed to basic and acidic residues; that stretch reads DNKDKEKEKEKTR. A compositionally biased stretch (polar residues) spans 545 to 564; the sequence is SDGTASTNRTSSYQRSTSHT. Residues 571–592 show a composition bias toward low complexity; it reads SSSRDLPAKSSSASSLEPNNSK. A compositionally biased stretch (polar residues) spans 593-607; it reads AWQPSSYYQSYSIHR. Low complexity predominate over residues 620–639; it reads SSTSSSTTTTTTTSSVTSPT. A compositionally biased stretch (basic and acidic residues) spans 649–664; the sequence is WAEESAEKEKEKEKES. Over residues 665–686 the composition is skewed to low complexity; it reads ATVIPTINTAGTTTTTSTTGTV. Over residues 702–711 the composition is skewed to basic and acidic residues; it reads VRDEESESQR. Residues 712–722 show a composition bias toward basic residues; it reads KARSRQARQSR. The segment covering 747-789 has biased composition (basic and acidic residues); sequence RPREDEKEEKEKQDKEKQEEKKETETKEDDYRSRYRSFEEKYR. Residues 790–819 show a composition bias toward low complexity; it reads TSLASSTTASSTIPSSSSSSSSSLYSTSSL. The segment covering 820-829 has biased composition (polar residues); that stretch reads NRPNSLTGLT. The span at 835-863 shows a compositional bias: basic and acidic residues; that stretch reads STRDTDRESDRKEKDEDRDGDDKSQPRSI. The segment covering 864 to 875 has biased composition (basic residues); sequence RDRRRPREKRRS. Composition is skewed to basic and acidic residues over residues 890–906 and 934–947; these read PDHP…EPQS and GESR…EKDD.

PP1 comprises a catalytic subunit, and one or several targeting or regulatory subunits. Ppp1r12a mediates binding to myosin.

Its subcellular location is the cytoplasm. Its function is as follows. Regulates myosin phosphatase activity. The protein is Protein phosphatase 1 regulatory subunit 12A (ppp1r12a) of Danio rerio (Zebrafish).